Reading from the N-terminus, the 500-residue chain is Lysine--tRNA ligase (500 aa).

Glutamate 410 and glutamate 417 together coordinate Mg(2+).

This sequence belongs to the class-II aminoacyl-tRNA synthetase family. Homodimer. It depends on Mg(2+) as a cofactor.

The protein localises to the cytoplasm. It catalyses the reaction tRNA(Lys) + L-lysine + ATP = L-lysyl-tRNA(Lys) + AMP + diphosphate. The sequence is that of Lysine--tRNA ligase from Shewanella putrefaciens (strain CN-32 / ATCC BAA-453).